The primary structure comprises 110 residues: Insulin-2 (110 aa).

Residues M1 to A24 form the signal peptide. Disulfide bonds link C31–C96, C43–C109, and C95–C100. The propeptide at E57–Q87 is c peptide.

This sequence belongs to the insulin family. Heterodimer of a B chain and an A chain linked by two disulfide bonds.

Its subcellular location is the secreted. In terms of biological role, insulin decreases blood glucose concentration. It increases cell permeability to monosaccharides, amino acids and fatty acids. It accelerates glycolysis, the pentose phosphate cycle, and glycogen synthesis in liver. The chain is Insulin-2 (Ins2) from Rattus norvegicus (Rat).